Here is a 529-residue protein sequence, read N- to C-terminus: Probable biotin-dependent acyl-coenzyme A carboxylase beta2 subunit (529 aa).

The 252-residue stretch at Met20–Val271 folds into the CoA carboxyltransferase N-terminal domain. The 251-residue stretch at Pro270–Gly520 folds into the CoA carboxyltransferase C-terminal domain.

Belongs to the AccD/PCCB family. As to quaternary structure, the biotin-dependent acyl-CoA carboxylase complex is composed of an AccA protein, which contains the biotin carboxylase (BC) and biotin carboxyl carrier protein (BCCP) domains, and an AccD protein, which contains the carboxyl transferase (CT) domain.

Functionally, component of a biotin-dependent acyl-CoA carboxylase complex. This subunit transfers the CO2 from carboxybiotin to the CoA ester substrate. The chain is Probable biotin-dependent acyl-coenzyme A carboxylase beta2 subunit (accD2) from Mycobacterium tuberculosis (strain ATCC 25618 / H37Rv).